The sequence spans 205 residues: Small ribosomal subunit protein uS4 (205 aa).

Residues M1–D12 are compositionally biased toward basic residues. Residues M1 to G49 form a disordered region. An S4 RNA-binding domain is found at R94–A156.

Belongs to the universal ribosomal protein uS4 family. Part of the 30S ribosomal subunit. Contacts protein S5. The interaction surface between S4 and S5 is involved in control of translational fidelity.

Its function is as follows. One of the primary rRNA binding proteins, it binds directly to 16S rRNA where it nucleates assembly of the body of the 30S subunit. With S5 and S12 plays an important role in translational accuracy. The chain is Small ribosomal subunit protein uS4 from Methylobacterium nodulans (strain LMG 21967 / CNCM I-2342 / ORS 2060).